Here is an 865-residue protein sequence, read N- to C-terminus: V-type proton ATPase 116 kDa subunit a 3 (865 aa).

Residues 1 to 409 (MGSIYRSEHM…VNPAPWTIIS (409 aa)) are Cytoplasmic-facing. Residues 51-121 (FVNEVRRCDE…NKNCKVLKNN (71 aa)) are a coiled coil. A helical membrane pass occupies residues 410 to 430 (FPFLFAVMFGDAGHGIIMLIA). At 431-453 (ASAFVIFEKKLISMKIKDEIFNT) the chain is on the extracellular side. Residues 454–474 (FFGGRYVVLLMGMFAIYTGFI) traverse the membrane as a helical segment. Topologically, residues 475 to 556 (YNDFYSKSVN…FLNPMKMKTS (82 aa)) are cytoplasmic. A helical membrane pass occupies residues 557-577 (ILLGISQMAFGIMLSLMNHIG). An N-linked (GlcNAc...) asparagine glycan is attached at Asn578. Over 578–583 (NRSVVD) the chain is Extracellular. A helical transmembrane segment spans residues 584–604 (IVFVFIPQCLFLGCIFVYLCL). Residues 605 to 623 (QVLMKWIFFYVKPAYIFGR) are Cytoplasmic-facing. A helical membrane pass occupies residues 624 to 644 (LYPGSNCAPSLLIGLINMFMV). Residues 645–688 (KSRDASFAHDVGTAAGKEWVIVNGQNVTYTINDQCYLQQWYPNQ) lie on the Extracellular side of the membrane. N-linked (GlcNAc...) asparagine glycosylation is found at Asn670 and Asn687. The helical transmembrane segment at 689–709 (SLVELILLLIAVVSVPVMLLV) threads the bilayer. Topologically, residues 710 to 798 (KPFYIRWRHS…LTMGGWGGSA (89 aa)) are cytoplasmic. The chain crosses the membrane as a helical span at residues 799–819 (AITILFYFIFSILSVCILILM). The Extracellular portion of the chain corresponds to 820-865 (EGLSAFLHAIRLHWVEFQSKFYGGTGIQFEPFCFTKIIRVYEGLDQ).

This sequence belongs to the V-ATPase 116 kDa subunit family. V-ATPase is a heteromultimeric enzyme made up of two complexes: the ATP-hydrolytic V1 complex and the proton translocation V0 complex. The V1 complex consists of three catalytic AB heterodimers that form a heterohexamer, three peripheral stalks each consisting of EG heterodimers, one central rotor including subunits D and F, and the regulatory subunits C and H. The proton translocation complex V0 consists of the proton transport subunit a, a ring of proteolipid subunits c9c'', rotary subunit d, subunits e and f, and the accessory subunits vah-19/Ac45 and vah-20/PRR. Interacts with V-type proton ATPase subunit C vha-11.

It localises to the apical cell membrane. Its function is as follows. Subunit of the V0 complex of vacuolar(H+)-ATPase (V-ATPase), a multisubunit enzyme composed of a peripheral complex (V1) that hydrolyzes ATP and a membrane integral complex (V0) that translocates protons. V-ATPase is responsible for acidifying and maintaining the pH of intracellular compartments and in some cell types, is targeted to the plasma membrane, where it is responsible for acidifying the extracellular environment. In the intestine, required for the rhythmic defecation behavior by promoting acidification in the gut lumen following defecation. Also, luminal acidification is required for nutrient uptake. The sequence is that of V-type proton ATPase 116 kDa subunit a 3 from Caenorhabditis elegans.